The following is a 104-amino-acid chain: Zinc-containing ferredoxin-2 (104 aa).

The segment at 2-37 (GIDPNYRQNRQVVGEHEGHKIYGPVEPPGKLGIHGT) is N-terminal extension. Zn(2+)-binding residues include His17, His20, and His35. 4Fe-4S ferredoxin-type domains follow at residues 38–66 (IVGV…WFDT) and 75–104 (KADP…VKPP). [3Fe-4S] cluster-binding residues include Cys46 and Cys52. Cys56 is a [4Fe-4S] cluster binding site. Asp77 provides a ligand contact to Zn(2+). Cys84, Cys87, and Cys90 together coordinate [4Fe-4S] cluster. Residue Cys94 coordinates [3Fe-4S] cluster.

[3Fe-4S] cluster is required as a cofactor. It depends on [4Fe-4S] cluster as a cofactor. Zn(2+) serves as cofactor.

Functionally, ferredoxins are iron-sulfur proteins that transfer electrons in a wide variety of metabolic reactions. The polypeptide is Zinc-containing ferredoxin-2 (zfx2) (Sulfurisphaera tokodaii (strain DSM 16993 / JCM 10545 / NBRC 100140 / 7) (Sulfolobus tokodaii)).